The following is a 681-amino-acid chain: PWWP domain-containing DNA repair factor 3B (681 aa).

Residues 102-121 show a composition bias toward polar residues; sequence NLSQESMSEEQPTATASENV. Disordered stretches follow at residues 102-144, 166-200, and 285-304; these read NLSQ…TQED, HTTG…DDKK, and QNQS…AGCS. A Phosphoserine modification is found at serine 128. Positions 285 to 302 are enriched in polar residues; sequence QNQSSVESDVGAETSTAG. Residues 377–438 form the PWWP domain; sequence TGMIVWFKYQ…KKYDCKEKQA (62 aa).

It belongs to the PWWP3A family.

This is PWWP domain-containing DNA repair factor 3B (Pwwp3b) from Mus musculus (Mouse).